Reading from the N-terminus, the 354-residue chain is Guanine nucleotide-binding protein G(o) subunit alpha (354 aa).

Gly2 is lipidated: N-myristoyl glycine. Cys3 is lipidated: S-palmitoyl cysteine. The region spanning 32-354 (KDVKLLLLGA…ANNLRGCGLY (323 aa)) is the G-alpha domain. Residues 35–48 (KLLLLGAGESGKST) form a G1 motif region. Glu43, Lys46, Ser47, Thr48, Ser152, Leu176, Arg177, Thr178, and Arg179 together coordinate GTP. Ser47 is a Mg(2+) binding site. The interval 174 to 182 (DILRTRVKT) is G2 motif. Thr182 is a Mg(2+) binding site. The tract at residues 197–206 (FRLFDVGGQR) is G3 motif. 5-glutamyl histamine is present on Gln205. The G4 motif stretch occupies residues 266–273 (ILFLNKKD). GTP contacts are provided by Asn270, Asp273, and Cys325. The tract at residues 324 to 329 (TCATDT) is G5 motif. A lipid anchor (S-palmitoyl cysteine) is attached at Cys351.

The protein belongs to the G-alpha family. G(i/o/t/z) subfamily. As to quaternary structure, g proteins are composed of 3 units; alpha, beta and gamma. The alpha chain contains the guanine nucleotide binding site. Forms a complex with GNB1 and GNG3. Interacts with RGS14. Interacts with RGS16. Interacts with RGS19. Interacts (when palmitoylated) with ADGRG3. In terms of processing, histaminylated at Gln-205 residues by TGM2.

The protein resides in the cell membrane. Its subcellular location is the membrane. It carries out the reaction GTP + H2O = GDP + phosphate + H(+). The GTPase activity is promoted by GTPAse activators, such as RGS14, RGS16 and RGS19. Guanine nucleotide-binding proteins (G proteins) function as transducers downstream of G protein-coupled receptors (GPCRs) in numerous signaling cascades. The alpha chain contains the guanine nucleotide binding site and alternates between an active, GTP-bound state and an inactive, GDP-bound state. Signaling by an activated GPCR promotes GDP release and GTP binding. The alpha subunit has a low GTPase activity that converts bound GTP to GDP, thereby terminating the signal. Both GDP release and GTP hydrolysis are modulated by numerous regulatory proteins. Signaling is mediated via effector proteins, such as adenylate cyclase. Inhibits adenylate cyclase activity, leading to decreased intracellular cAMP levels. The protein is Guanine nucleotide-binding protein G(o) subunit alpha (Gnao1) of Mus musculus (Mouse).